Reading from the N-terminus, the 257-residue chain is MAIHPTAVVEPGAQVDPSAEIGALAVVGPHVRVGPRTVVGPHAVLAGRTTLGEGNRIFPHAVVGEVPQDLKYRGEPTELVVGDRNTFREGVTISTGTVQGGGVTRIGSGCLFMANSHVGHDCVIGDGAIIANSVALAGHVELEDHVHFSGLAAAHQFCRIGRLAFVSGLTGVTMDVPPFCTVAGPRAELAGLNAVGMQRAGLSEERIGRVKQAYKIVFRSNLGLAEAIAQVEAELGMHEDVAHFVRFLKGTQRGITR.

This sequence belongs to the transferase hexapeptide repeat family. LpxA subfamily. Homotrimer.

The protein localises to the cytoplasm. It catalyses the reaction a (3R)-hydroxyacyl-[ACP] + UDP-N-acetyl-alpha-D-glucosamine = a UDP-3-O-[(3R)-3-hydroxyacyl]-N-acetyl-alpha-D-glucosamine + holo-[ACP]. Its pathway is glycolipid biosynthesis; lipid IV(A) biosynthesis; lipid IV(A) from (3R)-3-hydroxytetradecanoyl-[acyl-carrier-protein] and UDP-N-acetyl-alpha-D-glucosamine: step 1/6. Its function is as follows. Involved in the biosynthesis of lipid A, a phosphorylated glycolipid that anchors the lipopolysaccharide to the outer membrane of the cell. The protein is Acyl-[acyl-carrier-protein]--UDP-N-acetylglucosamine O-acyltransferase of Anaeromyxobacter sp. (strain Fw109-5).